The chain runs to 208 residues: Ribosome maturation factor RimP (208 aa).

The segment at 165–208 (TAQPKKGQRQGKEPAKESGQKKQLAEAAPRSGSKRSERGSEKRK) is disordered. Basic and acidic residues-rich tracts occupy residues 174–188 (QGKE…KKQL) and 198–208 (KRSERGSEKRK).

The protein belongs to the RimP family.

Its subcellular location is the cytoplasm. Required for maturation of 30S ribosomal subunits. This chain is Ribosome maturation factor RimP, found in Sorangium cellulosum (strain So ce56) (Polyangium cellulosum (strain So ce56)).